A 140-amino-acid chain; its full sequence is uncharacterized protein (140 aa).

This sequence to B.subtilis YrhD.

This is an uncharacterized protein from Archaeoglobus fulgidus (strain ATCC 49558 / DSM 4304 / JCM 9628 / NBRC 100126 / VC-16).